A 61-amino-acid chain; its full sequence is L-amino-acid oxidase (61 aa).

43-44 (MA) is a binding site for FAD.

Belongs to the flavin monoamine oxidase family. FIG1 subfamily. Homodimer; non-covalently linked. FAD is required as a cofactor. N-glycosylated. Expressed by the venom gland.

Its subcellular location is the secreted. It carries out the reaction an L-alpha-amino acid + O2 + H2O = a 2-oxocarboxylate + H2O2 + NH4(+). The catalysed reaction is L-leucine + O2 + H2O = 4-methyl-2-oxopentanoate + H2O2 + NH4(+). Its function is as follows. Catalyzes an oxidative deamination of predominantly hydrophobic and aromatic L-amino acids, thus producing hydrogen peroxide that may contribute to the diverse toxic effects of this enzyme. Shows activity on L-Leu. Exhibits diverse biological activities, such as apoptosis, antibacterial activities against both Gram-negative and Gram-positive bacteria and antiparasitic activities, as well as induction of platelet aggregation. Effects of snake L-amino oxidases on platelets are controversial, since they either induce aggregation or inhibit agonist-induced aggregation. These different effects are probably due to different experimental conditions. This protein may also induce hemorrhage, hemolysis, and edema. In Crotalus durissus cascavella (Northeastern Brazilian rattlesnake), this protein is L-amino-acid oxidase.